We begin with the raw amino-acid sequence, 126 residues long: MHELSYATSVLNAILDAIKQQETLGRKVIKVTDINLEIGDLTLLSVDQLQFVFEVISEDTVCNGAELKAEMVKPKIFCMDCEFEGNLDTKDELEVRCPKCESVNVKLKGGKEFNIVNATIEFDDEE.

His2 contributes to the Ni(2+) binding site. Residues Cys78, Cys81, Cys97, and Cys100 each coordinate Zn(2+).

Belongs to the HypA/HybF family.

In terms of biological role, involved in the maturation of [NiFe] hydrogenases. Required for nickel insertion into the metal center of the hydrogenase. In Methanococcus maripaludis (strain C6 / ATCC BAA-1332), this protein is Hydrogenase maturation factor HypA.